The following is a 65-amino-acid chain: Large ribosomal subunit protein uL29 (65 aa).

It belongs to the universal ribosomal protein uL29 family.

In Lactobacillus delbrueckii subsp. bulgaricus (strain ATCC 11842 / DSM 20081 / BCRC 10696 / JCM 1002 / NBRC 13953 / NCIMB 11778 / NCTC 12712 / WDCM 00102 / Lb 14), this protein is Large ribosomal subunit protein uL29.